The following is a 1639-amino-acid chain: Mediator of RNA polymerase II transcription subunit 14 (1639 aa).

The short motif at 49 to 53 is the LXXLL motif 1 element; sequence LAELL. Disordered stretches follow at residues 561–586 and 709–755; these read GQSP…GSDS and LPQP…KTVH. The span at 575–586 shows a compositional bias: low complexity; the sequence is SAAGGPAPGSDS. Pro residues predominate over residues 711–721; the sequence is QPKPPQAPPTP. A compositionally biased stretch (low complexity) spans 722–748; the sequence is QQQQQQQQQQQQPGTSDAKSSGAGASA. Residues 768–772 carry the LXXLL motif 2 motif; sequence LKRLL. Disordered regions lie at residues 1039-1243 and 1558-1639; these read RRSQ…HHYT and MQPG…GGPN. Composition is skewed to gly residues over residues 1062–1088 and 1122–1142; these read GNNG…GTGM and IGGG…GQGG. Positions 1189–1201 are enriched in polar residues; that stretch reads GPSSLSYMQSHTD. Over residues 1219–1229 the composition is skewed to pro residues; that stretch reads PGMPRPSPRPG. Residues 1558 to 1579 are compositionally biased toward gly residues; the sequence is MQPGGGPGVPGGPGGPMGGQIG. Positions 1589-1603 are enriched in low complexity; it reads VGSSPSPMMHSPMQQ. Positions 1604-1639 are enriched in gly residues; that stretch reads MGGGGPQPGAYGGMVGGPGGGPQSGGPVGGGPGGPN.

This sequence belongs to the Mediator complex subunit 14 family. Component of the Mediator complex.

It is found in the nucleus. In terms of biological role, component of the Mediator complex, a coactivator involved in the regulated transcription of nearly all RNA polymerase II-dependent genes. Mediator functions as a bridge to convey information from gene-specific regulatory proteins to the basal RNA polymerase II transcription machinery. Mediator is recruited to promoters by direct interactions with regulatory proteins and serves as a scaffold for the assembly of a functional preinitiation complex with RNA polymerase II and the general transcription factors. This chain is Mediator of RNA polymerase II transcription subunit 14 (MED14), found in Anopheles gambiae (African malaria mosquito).